A 456-amino-acid chain; its full sequence is uncharacterized protein (456 aa).

Belongs to the herpesviridae UL49 family.

This is an uncharacterized protein from Equus caballus (Horse).